A 111-amino-acid chain; its full sequence is Rhodanese domain-containing protein CG4456 (111 aa).

The Rhodanese domain occupies 12 to 110; that stretch reads NHPDVYLIDV…SWNEWAQKEG (99 aa).

This is Rhodanese domain-containing protein CG4456 from Drosophila melanogaster (Fruit fly).